We begin with the raw amino-acid sequence, 217 residues long: MSSNNKTDDSDDRSFWQNSTSYDASSKIFLVTTVSFSIIIIIVFVYYLYAKFVLHRRSAFQDLSFSVVSQPPKRGLDSLVIASLPTFVVGIKNDVAGTECAVCLSLLEEKDNARMLPNCKHVFHVSCVDTWLTTQSTCPVCRTEAEPSHPRLEPEPREGPVGDFAPPLDFAGVDNKTGGSSVSRLDSFRRILTRERSSNRRDHSRVDQDRELDIERQ.

Residues 28–48 (IFLVTTVSFSIIIIIVFVYYL) traverse the membrane as a helical segment. The segment at 100 to 142 (CAVCLSLLEEKDNARMLPNCKHVFHVSCVDTWLTTQSTCPVCR) adopts an RING-type; atypical zinc-finger fold. Composition is skewed to basic and acidic residues over residues 143–160 (TEAEPSHPRLEPEPREGP) and 186–217 (DSFRRILTRERSSNRRDHSRVDQDRELDIERQ). Residues 143 to 217 (TEAEPSHPRL…QDRELDIERQ (75 aa)) are disordered.

Belongs to the RING-type zinc finger family. ATL subfamily.

It localises to the membrane. It catalyses the reaction S-ubiquitinyl-[E2 ubiquitin-conjugating enzyme]-L-cysteine + [acceptor protein]-L-lysine = [E2 ubiquitin-conjugating enzyme]-L-cysteine + N(6)-ubiquitinyl-[acceptor protein]-L-lysine.. It participates in protein modification; protein ubiquitination. The sequence is that of RING-H2 finger protein ATL40 (ATL40) from Arabidopsis thaliana (Mouse-ear cress).